Consider the following 205-residue polypeptide: Small ribosomal subunit protein uS4 (205 aa).

A disordered region spans residues 20-44 (WGRPKSPVNRREYGPGQHGQRRKGK). One can recognise an S4 RNA-binding domain in the interval 94-154 (SRLDAIVYRS…ERSKQLLLVL (61 aa)).

The protein belongs to the universal ribosomal protein uS4 family. In terms of assembly, part of the 30S ribosomal subunit. Contacts protein S5. The interaction surface between S4 and S5 is involved in control of translational fidelity.

Functionally, one of the primary rRNA binding proteins, it binds directly to 16S rRNA where it nucleates assembly of the body of the 30S subunit. Its function is as follows. With S5 and S12 plays an important role in translational accuracy. The polypeptide is Small ribosomal subunit protein uS4 (Bartonella bacilliformis (strain ATCC 35685 / KC583 / Herrer 020/F12,63)).